Consider the following 361-residue polypeptide: Holliday junction branch migration complex subunit RuvB (361 aa).

The large ATPase domain (RuvB-L) stretch occupies residues 1 to 183; the sequence is MAEPSLVAAG…FGFTGHLEFY (183 aa). ATP contacts are provided by residues leucine 22, arginine 23, glycine 64, lysine 67, threonine 68, threonine 69, 130–132, arginine 173, tyrosine 183, and arginine 220; that span reads EDF. Threonine 68 lines the Mg(2+) pocket. Residues 184–254 are small ATPAse domain (RuvB-S); it reads SVPELELVLR…SASAALDMYE (71 aa). Positions 257–361 are head domain (RuvB-H); it reads KKGLDRLDRS…VTGEWAPESQ (105 aa). The DNA site is built by arginine 312 and arginine 317.

Belongs to the RuvB family. As to quaternary structure, homohexamer. Forms an RuvA(8)-RuvB(12)-Holliday junction (HJ) complex. HJ DNA is sandwiched between 2 RuvA tetramers; dsDNA enters through RuvA and exits via RuvB. An RuvB hexamer assembles on each DNA strand where it exits the tetramer. Each RuvB hexamer is contacted by two RuvA subunits (via domain III) on 2 adjacent RuvB subunits; this complex drives branch migration. In the full resolvosome a probable DNA-RuvA(4)-RuvB(12)-RuvC(2) complex forms which resolves the HJ.

Its subcellular location is the cytoplasm. It carries out the reaction ATP + H2O = ADP + phosphate + H(+). In terms of biological role, the RuvA-RuvB-RuvC complex processes Holliday junction (HJ) DNA during genetic recombination and DNA repair, while the RuvA-RuvB complex plays an important role in the rescue of blocked DNA replication forks via replication fork reversal (RFR). RuvA specifically binds to HJ cruciform DNA, conferring on it an open structure. The RuvB hexamer acts as an ATP-dependent pump, pulling dsDNA into and through the RuvAB complex. RuvB forms 2 homohexamers on either side of HJ DNA bound by 1 or 2 RuvA tetramers; 4 subunits per hexamer contact DNA at a time. Coordinated motions by a converter formed by DNA-disengaged RuvB subunits stimulates ATP hydrolysis and nucleotide exchange. Immobilization of the converter enables RuvB to convert the ATP-contained energy into a lever motion, pulling 2 nucleotides of DNA out of the RuvA tetramer per ATP hydrolyzed, thus driving DNA branch migration. The RuvB motors rotate together with the DNA substrate, which together with the progressing nucleotide cycle form the mechanistic basis for DNA recombination by continuous HJ branch migration. Branch migration allows RuvC to scan DNA until it finds its consensus sequence, where it cleaves and resolves cruciform DNA. This chain is Holliday junction branch migration complex subunit RuvB, found in Pseudarthrobacter chlorophenolicus (strain ATCC 700700 / DSM 12829 / CIP 107037 / JCM 12360 / KCTC 9906 / NCIMB 13794 / A6) (Arthrobacter chlorophenolicus).